Reading from the N-terminus, the 306-residue chain is Stimulator of interferon genes protein 5 (306 aa).

Residues 1 to 50 are disordered; it reads MMSNDSQSEKRTAKWTGSGTPIAEGEESSSPSAHQTRQKATAADDDDDQQ. Positions 119, 180, and 186 each coordinate 2',3'-cGAMP.

It belongs to the STING family.

Functionally, facilitator of innate immune signaling that acts as a sensor of second messenger signals produced by cyclic GMP-AMP synthase-like receptors (cGLRs) and promotes the production of type I interferon. Innate immune response is triggered in response to nucleotides from viruses and bacteria delivered to the cytoplasm. Acts by binding cyclic dinucleotides: recognizes and binds 2'-3' linked cGAMP (2'-3'-cGAMP), a second messengers produced by cGLRs in response to nucleotides in the cytosol, such as double-stranded RNA (dsRNA). Upon binding to 2'-3'-cGAMP, oligomerizes and promotes the recruitment and subsequent activation of the transcription factor IRF3 to induce expression of type I interferon. The sequence is that of Stimulator of interferon genes protein 5 from Stylophora pistillata (Smooth cauliflower coral).